Reading from the N-terminus, the 607-residue chain is Polyadenylate-binding protein 1-like (607 aa).

RRM domains are found at residues 11 to 89 (SSLY…WSHR), 99 to 175 (GNIF…HFKS), 191 to 268 (TNIY…RAQK), and 294 to 370 (VNLY…LAQR). Residues 523–600 (HQPLTVSMLA…AVAVLQVHRE (78 aa)) form the PABC domain.

Belongs to the polyadenylate-binding protein type-1 family. In terms of tissue distribution, expressed in ovary and testis.

The protein localises to the cytoplasm. Its function is as follows. Poly(A)-binding protein involved in oocyte maturation and early embryo development. It is required for cytosolic mRNA polyadenylation and translational activation of maternally stored mRNA in oocytes. This is Polyadenylate-binding protein 1-like from Mus musculus (Mouse).